A 483-amino-acid chain; its full sequence is Matrix metalloproteinase-20 (483 aa).

Positions 1–22 are cleaved as a signal peptide; sequence MKVLPASGLAVLLVTALKFSAA. Positions 23–107 are cleaved as a propeptide — activation peptide; sequence APSLFAATPR…PRCGVPDVAN (85 aa). The Cysteine switch signature appears at 98 to 105; that stretch reads PRCGVPDV. Cysteine 100 lines the Zn(2+) pocket. Glutamate 164, alanine 165, and aspartate 166 together coordinate Ca(2+). Zn(2+) contacts are provided by histidine 176 and aspartate 178. Residues aspartate 183, glycine 184, arginine 186, and threonine 188 each contribute to the Ca(2+) site. Histidine 191 is a Zn(2+) binding site. Residues glutamate 197, glycine 198, glycine 200, and aspartate 202 each coordinate Ca(2+). Histidine 204 is a binding site for Zn(2+). Residues aspartate 206 and glutamate 209 each contribute to the Ca(2+) site. Histidine 226 lines the Zn(2+) pocket. Glutamate 227 is an active-site residue. Zn(2+)-binding residues include histidine 230 and histidine 236. Hemopexin repeat units follow at residues 293-343, 344-389, 391-439, and 440-483; these read PDIC…FPQL, MSNV…GFPR, VQRI…FSGV, and NGQI…WIGC. A disulfide bond links cysteine 296 and cysteine 483.

Belongs to the peptidase M10A family. Requires Zn(2+) as cofactor. It depends on Ca(2+) as a cofactor. Post-translationally, autoactivates at least at the 107-Asn-|-Tyr-108 site. As to expression, expressed specifically in the enamel organ.

It is found in the secreted. The protein resides in the extracellular space. It localises to the extracellular matrix. Degrades amelogenin, the major protein component of the enamel matrix and two of the macromolecules characterizing the cartilage extracellular matrix: aggrecan and the cartilage oligomeric matrix protein (COMP). May play a central role in tooth enamel formation. This Sus scrofa (Pig) protein is Matrix metalloproteinase-20 (MMP20).